Here is a 122-residue protein sequence, read N- to C-terminus: Prefoldin subunit 1 (122 aa).

The residue at position 2 (alanine 2) is an N-acetylalanine.

This sequence belongs to the prefoldin subunit beta family. In terms of assembly, heterohexamer of two PFD-alpha type and four PFD-beta type subunits.

Its function is as follows. Binds specifically to cytosolic chaperonin (c-CPN) and transfers target proteins to it. Binds to nascent polypeptide chain and promotes folding in an environment in which there are many competing pathways for nonnative proteins. This Homo sapiens (Human) protein is Prefoldin subunit 1 (PFDN1).